A 134-amino-acid chain; its full sequence is ATP synthase epsilon chain (134 aa).

Belongs to the ATPase epsilon chain family. In terms of assembly, F-type ATPases have 2 components, CF(1) - the catalytic core - and CF(0) - the membrane proton channel. CF(1) has five subunits: alpha(3), beta(3), gamma(1), delta(1), epsilon(1). CF(0) has three main subunits: a, b and c.

The protein resides in the cell membrane. Its function is as follows. Produces ATP from ADP in the presence of a proton gradient across the membrane. The sequence is that of ATP synthase epsilon chain (atpC) from Priestia megaterium (strain ATCC 12872 / QMB1551) (Bacillus megaterium).